The chain runs to 78 residues: Small ribosomal subunit protein bS16c (78 aa).

This sequence belongs to the bacterial ribosomal protein bS16 family.

The protein resides in the plastid. It is found in the chloroplast. This chain is Small ribosomal subunit protein bS16c, found in Daucus carota (Wild carrot).